Reading from the N-terminus, the 227-residue chain is UPF0441 protein YPO0661/y3517/YP_2976 (227 aa).

A disordered region spans residues 198-227 (GGFGESVAKQSSMQRSAATSSKTTTRSMGG). Positions 212-227 (RSAATSSKTTTRSMGG) are enriched in low complexity.

It belongs to the UPF0441 family.

This Yersinia pestis protein is UPF0441 protein YPO0661/y3517/YP_2976.